Reading from the N-terminus, the 317-residue chain is MPVQGSQRRLLGSLNSTPTATPHLGLAANQTGARCLEVSIPDGLFLSLGLVSLVENVLVVTAIAKNRNLHSPMYCFICCLALSDLLVSGSNMLETAVILLLEAGALAARAAVVQQLDNVIDVITCSSMLSSLCFLGAIAVDRYISIFYALRYHSIVTLPRARRAVAAIWVASVLFSMLFIAYYDHAAVLLCLVVFFLAMLVLMAVLYVHMLARACQHAQGIARLHKRQCPAHQGFGLKGAATLTILLGIFFLCWGPFFLHLTLIVLCPQHPTCSCIFKNFNLFLALIICNAIIDPLIYAFRSQELRRTLKEVLLCSW.

Topologically, residues 1-37 (MPVQGSQRRLLGSLNSTPTATPHLGLAANQTGARCLE) are extracellular. An N-linked (GlcNAc...) asparagine glycan is attached at Asn-29. A helical transmembrane segment spans residues 38-63 (VSIPDGLFLSLGLVSLVENVLVVTAI). The Cytoplasmic portion of the chain corresponds to 64–72 (AKNRNLHSP). A helical transmembrane segment spans residues 73 to 93 (MYCFICCLALSDLLVSGSNML). Residues 94–118 (ETAVILLLEAGALAARAAVVQQLDN) are Extracellular-facing. Residues 119–140 (VIDVITCSSMLSSLCFLGAIAV) form a helical membrane-spanning segment. At 141-163 (DRYISIFYALRYHSIVTLPRARR) the chain is on the cytoplasmic side. The chain crosses the membrane as a helical span at residues 164-183 (AVAAIWVASVLFSMLFIAYY). Over 184 to 191 (DHAAVLLC) the chain is Extracellular. Residues 192–211 (LVVFFLAMLVLMAVLYVHML) traverse the membrane as a helical segment. At 212–240 (ARACQHAQGIARLHKRQCPAHQGFGLKGA) the chain is on the cytoplasmic side. A helical membrane pass occupies residues 241 to 266 (ATLTILLGIFFLCWGPFFLHLTLIVL). Residues 267–279 (CPQHPTCSCIFKN) lie on the Extracellular side of the membrane. The helical transmembrane segment at 280–300 (FNLFLALIICNAIIDPLIYAF) threads the bilayer. Residues 301–317 (RSQELRRTLKEVLLCSW) are Cytoplasmic-facing. Residue Cys-315 is the site of S-palmitoyl cysteine attachment.

It belongs to the G-protein coupled receptor 1 family. As to quaternary structure, interacts with MGRN1, but does not undergo MGRN1-mediated ubiquitination; this interaction competes with GNAS-binding and thus inhibits agonist-induced cAMP production. Interacts with OPN3; the interaction results in a decrease in MC1R-mediated cAMP signaling and ultimately a decrease in melanin production in melanocytes.

Its subcellular location is the cell membrane. Functionally, receptor for MSH (alpha, beta and gamma) and ACTH. The activity of this receptor is mediated by G proteins which activate adenylate cyclase. Mediates melanogenesis, the production of eumelanin (black/brown) and phaeomelanin (red/yellow), via regulation of cAMP signaling in melanocytes. The protein is Melanocyte-stimulating hormone receptor (MC1R) of Chlorocebus aethiops (Green monkey).